Here is a 198-residue protein sequence, read N- to C-terminus: Paired-like homeodomain transcription factor LEUTX (198 aa).

Residues 33–67 constitute a DNA-binding region (homeobox); the sequence is PSLATMGKLASKLQLDLSVVKIWFKNQRAKWKRQQ. Residues 65-133 form a disordered region; that stretch reads RQQRQQMQTR…PGGASASARV (69 aa). The segment at 79-190 is LEUTX region; the sequence is PANQTTSVKK…NQYLFPVCLE (112 aa). The span at 110–119 shows a compositional bias: basic and acidic residues; that stretch reads ANDHDLREPS. 4 consecutive short sequence motifs (9aaTAD) follow at residues 125–136, 153–161, 163–171, and 178–186; these read GGASASARVSSW, PPWASTLFE, DEFVKIYDL, and SSLNQYLFP.

It belongs to the paired homeobox family.

Its subcellular location is the nucleus. In terms of biological role, paired-like homeobox transcription factor involved in embryogenesis. May act as a regulator of embryo genome activation. Binds to a 36 bp DNA elements containing a 5'-TAATCC-3' sequence motif, referred to as EEA motif (EGA-enriched Alu-motif), present in the promoters of target genes activated in early embryos. Inactive transcriptional activity. This chain is Paired-like homeodomain transcription factor LEUTX, found in Homo sapiens (Human).